The primary structure comprises 164 residues: Ribosome maturation factor RimM (164 aa).

The PRC barrel domain occupies 90–161 (KGSYFIADLI…TVTIKPLEIW (72 aa)).

This sequence belongs to the RimM family. In terms of assembly, binds ribosomal protein uS19.

The protein localises to the cytoplasm. Its function is as follows. An accessory protein needed during the final step in the assembly of 30S ribosomal subunit, possibly for assembly of the head region. Essential for efficient processing of 16S rRNA. May be needed both before and after RbfA during the maturation of 16S rRNA. It has affinity for free ribosomal 30S subunits but not for 70S ribosomes. The polypeptide is Ribosome maturation factor RimM (Clostridium botulinum (strain Langeland / NCTC 10281 / Type F)).